Reading from the N-terminus, the 426-residue chain is Proline--tRNA ligase (426 aa).

The protein belongs to the class-II aminoacyl-tRNA synthetase family. ProS type 2 subfamily. As to quaternary structure, homodimer.

The protein localises to the cytoplasm. It carries out the reaction tRNA(Pro) + L-proline + ATP = L-prolyl-tRNA(Pro) + AMP + diphosphate. Catalyzes the attachment of proline to tRNA(Pro) in a two-step reaction: proline is first activated by ATP to form Pro-AMP and then transferred to the acceptor end of tRNA(Pro). This Rickettsia rickettsii (strain Iowa) protein is Proline--tRNA ligase.